We begin with the raw amino-acid sequence, 83 residues long: Small ribosomal subunit protein uS15c (83 aa).

This sequence belongs to the universal ribosomal protein uS15 family. In terms of assembly, part of the 30S ribosomal subunit.

It is found in the plastid. It localises to the chloroplast. This chain is Small ribosomal subunit protein uS15c (rps15), found in Fagopyrum esculentum subsp. ancestrale (Wild buckwheat).